Reading from the N-terminus, the 84-residue chain is Molybdopterin synthase sulfur carrier subunit (84 aa).

Gly84 is subject to 1-thioglycine; alternate. Gly84 carries the post-translational modification Glycyl adenylate; alternate.

Belongs to the MoaD family. MOCS2A subfamily. In terms of assembly, heterotetramer; composed of 2 small (MOCS2A) and 2 large (MOCS2B) subunits. C-terminal thiocarboxylation occurs in 2 steps, it is first acyl-adenylated (-COAMP) via the hesA/moeB/thiF part of MOCS3, then thiocarboxylated (-COSH) via the rhodanese domain of MOCS3.

It is found in the cytoplasm. It functions in the pathway cofactor biosynthesis; molybdopterin biosynthesis. Acts as a sulfur carrier required for molybdopterin biosynthesis. Component of the molybdopterin synthase complex that catalyzes the conversion of precursor Z into molybdopterin by mediating the incorporation of 2 sulfur atoms into precursor Z to generate a dithiolene group. In the complex, serves as sulfur donor by being thiocarboxylated (-COSH) at its C-terminus by MOCS3. After interaction with MOCS2B, the sulfur is then transferred to precursor Z to form molybdopterin. The sequence is that of Molybdopterin synthase sulfur carrier subunit from Caenorhabditis briggsae.